Consider the following 257-residue polypeptide: Folate receptor alpha (257 aa).

Positions 1–24 are cleaved as a signal peptide; it reads MAQRMTTQLLLLLVWVAVVGEAQT. Intrachain disulfides connect Cys37–Cys65, Cys57–Cys105, Cys66–Cys109, Cys89–Cys175, Cys96–Cys146, Cys135–Cys209, Cys139–Cys189, and Cys152–Cys169. Asn69 is a glycosylation site (N-linked (GlcNAc...) asparagine). Folate contacts are provided by residues Asp103, Tyr107, 124–128, 157–162, and Ser196; these read WRKER and HKGWNW. Residue Asn161 is glycosylated (N-linked (GlcNAc...) asparagine). N-linked (GlcNAc...) asparagine glycosylation is present at Asn201. A lipid anchor (GPI-anchor amidated serine) is attached at Ser234. The propeptide at 235-257 is removed in mature form; it reads GAGPWAAWPFLLSLALMLLWLLS.

Belongs to the folate receptor family. In terms of processing, the secreted form is derived from the membrane-bound form either by cleavage of the GPI anchor, or/and by proteolysis catalyzed by a metalloprotease. As to expression, primarily expressed in tissues of epithelial origin. Expression is increased in malignant tissues. Expressed in kidney, lung and cerebellum. Detected in placenta and thymus epithelium.

Its subcellular location is the cell membrane. The protein localises to the apical cell membrane. The protein resides in the basolateral cell membrane. It localises to the secreted. It is found in the cytoplasmic vesicle. Its subcellular location is the clathrin-coated vesicle. The protein localises to the endosome. In terms of biological role, binds to folate and reduced folic acid derivatives and mediates delivery of 5-methyltetrahydrofolate and folate analogs into the interior of cells. Has high affinity for folate and folic acid analogs at neutral pH. Exposure to slightly acidic pH after receptor endocytosis triggers a conformation change that strongly reduces its affinity for folates and mediates their release. Required for normal embryonic development and normal cell proliferation. The polypeptide is Folate receptor alpha (FOLR1) (Homo sapiens (Human)).